The sequence spans 215 residues: Elongation factor Ts (215 aa).

The tract at residues 80 to 83 (TDFV) is involved in Mg(2+) ion dislocation from EF-Tu.

It belongs to the EF-Ts family.

Its subcellular location is the cytoplasm. In terms of biological role, associates with the EF-Tu.GDP complex and induces the exchange of GDP to GTP. It remains bound to the aminoacyl-tRNA.EF-Tu.GTP complex up to the GTP hydrolysis stage on the ribosome. In Heliobacterium modesticaldum (strain ATCC 51547 / Ice1), this protein is Elongation factor Ts.